The primary structure comprises 183 residues: NADH-ubiquinone oxidoreductase 20.8 kDa subunit (183 aa).

2 consecutive CHCH domains span residues 44-87 (GARC…IADI) and 88-130 (NKSC…LGLK). 4 short sequence motifs (cx9C motif) span residues 47 to 57 (CRDYNDDFMQC), 69 to 79 (CLKEGRRVTRC), 91 to 101 (CLEEFRKHWTC), and 112 to 122 (CRPAEWKLNKC). Intrachain disulfides connect C47–C79, C57–C69, C91–C122, and C101–C112. Residues 161-183 (EPFVPPTQTGDNNKAPAAASSSS) form a disordered region.

The protein belongs to the complex I NDUFA8 subunit family. As to quaternary structure, complex I is composed of about 40 different subunits. This is a component of the hydrophobic fraction. Requires iron-sulfur cluster as cofactor.

It localises to the mitochondrion inner membrane. In terms of biological role, accessory subunit of the mitochondrial membrane respiratory chain NADH dehydrogenase (Complex I), that is believed not to be involved in catalysis. Complex I functions in the transfer of electrons from NADH to the respiratory chain. The immediate electron acceptor for the enzyme is believed to be ubiquinone. This Neurospora crassa (strain ATCC 24698 / 74-OR23-1A / CBS 708.71 / DSM 1257 / FGSC 987) protein is NADH-ubiquinone oxidoreductase 20.8 kDa subunit.